The primary structure comprises 504 residues: Procardosin-A (504 aa).

An N-terminal signal peptide occupies residues 1-24 (MGTSIKANVLALFLFYLLSPTVFS). A propeptide spanning residues 25 to 68 (VSDDGLIRIGLKKRKVDRIDQLRGRRALMEGNARKDFGFRGTVR) is cleaved from the precursor. A Peptidase A1 domain is found at 85-501 (YFGEIGIGTP…DYGNLLVGFA (417 aa)). D103 is an active-site residue. C116 and C122 are oxidised to a cystine. Residue N139 is glycosylated (N-linked (GlcNAc...) asparagine). An RGD motif motif is present at residues 246–248 (RGD). Residues C277 and C281 are joined by a disulfide bond. The active site involves D286. A propeptide spans 310 to 414 (GVMNQQCKTV…YANELCEHLS (105 aa)) (plant-specific insert). A Saposin B-type domain is found at 311-416 (VMNQQCKTVV…NELCEHLSTS (106 aa)). 4 cysteine pairs are disulfide-bonded: C316–C410, C341–C382, C347–C379, and C424–C461. An N-linked (GlcNAc...) asparagine glycan is attached at N432. The short motif at 455 to 457 (KGE) is the KGE motif element.

This sequence belongs to the peptidase A1 family. In terms of assembly, heterodimer of a light chain and a heavy chain. An intermediate form (35 kDa and 30 kDa subunits) is produced first, and undergoes proteolytic processing to remove the internal plant-specific insert (PSI) and the propeptide. There is some heterogeniety at the cleavage site. Interacts (via RGD or KGE motifs) with PLD1 (via C2 domain). Post-translationally, N-glycosylated. Glycans found at Asn-139 include approximately 6% oligomannose, 82% oligosaccharides of the plant modified type with proximal fucose but without xylose and 6% oligosaccharides of the plant modified type with proximal fucose and xylose. Glycans found at Asn-432 include 14% oligosaccharides of the plant modified type with proximal fucose but without xylose and 86% oligosaccharides of the plant modified type with proximal fucose and xylose. In terms of tissue distribution, detected only in pistils, not in seeds, roots, midribs, bracts, stamens, pollen, vascular or supporting tissues. Detected in seeds. High amounts are detected in the broad outer region of the upper portion of the stigma, towards the lower portion of the stigma it accumulates at the periphery. Within the stigma, expressed mainly in the epidermic papillae, lower levels are found in the cortical parenchyma. Present mainly in epidermal cells within the stye (at protein level). Expressed in young flower buds, and at lower levels in seeds, pollen and bracteas, but not in roots or leaves.

It is found in the microsome membrane. Its subcellular location is the protein storage vacuole. The protein localises to the secreted. It localises to the cell wall. The protein resides in the extracellular space. It is found in the extracellular matrix. Inhibited by the specific aspartic proteinase inhibitors diazoacetyl-noleucine methyl ester and pepstatin. Its function is as follows. Aspartic proteinase with a high preference for bonds between hydrophobic residues. Cleaves alpha-lactalbumin but not beta-lactoglobulin. In Cynara cardunculus (Cardoon), this protein is Procardosin-A.